A 156-amino-acid chain; its full sequence is 6,7-dimethyl-8-ribityllumazine synthase (156 aa).

Residues Phe23, Ala57–Glu59, and Ala81–Ile83 contribute to the 5-amino-6-(D-ribitylamino)uracil site. Ser86–Thr87 contributes to the (2S)-2-hydroxy-3-oxobutyl phosphate binding site. His89 (proton donor) is an active-site residue. A 5-amino-6-(D-ribitylamino)uracil-binding site is contributed by Phe114. A (2S)-2-hydroxy-3-oxobutyl phosphate-binding site is contributed by Arg128.

The protein belongs to the DMRL synthase family.

It carries out the reaction (2S)-2-hydroxy-3-oxobutyl phosphate + 5-amino-6-(D-ribitylamino)uracil = 6,7-dimethyl-8-(1-D-ribityl)lumazine + phosphate + 2 H2O + H(+). It functions in the pathway cofactor biosynthesis; riboflavin biosynthesis; riboflavin from 2-hydroxy-3-oxobutyl phosphate and 5-amino-6-(D-ribitylamino)uracil: step 1/2. Its function is as follows. Catalyzes the formation of 6,7-dimethyl-8-ribityllumazine by condensation of 5-amino-6-(D-ribitylamino)uracil with 3,4-dihydroxy-2-butanone 4-phosphate. This is the penultimate step in the biosynthesis of riboflavin. The protein is 6,7-dimethyl-8-ribityllumazine synthase of Helicobacter hepaticus (strain ATCC 51449 / 3B1).